The following is a 232-amino-acid chain: Zinc import ATP-binding protein ZnuC (232 aa).

The ABC transporter domain occupies 5-220 (VNLKNIFVFY…PSFIEMFGCY (216 aa)). An ATP-binding site is contributed by 37-44 (GPNGSGKS).

It belongs to the ABC transporter superfamily. Zinc importer (TC 3.A.1.15.5) family. In terms of assembly, the complex is composed of two ATP-binding proteins (ZnuC), two transmembrane proteins (ZnuB) and a solute-binding protein (ZnuA).

The protein localises to the cell membrane. The catalysed reaction is Zn(2+)(out) + ATP(in) + H2O(in) = Zn(2+)(in) + ADP(in) + phosphate(in) + H(+)(in). Part of the ABC transporter complex ZnuABC involved in zinc import. Responsible for energy coupling to the transport system. This chain is Zinc import ATP-binding protein ZnuC, found in Wigglesworthia glossinidia brevipalpis.